The primary structure comprises 186 residues: Tumor necrosis factor alpha-induced protein 8-like protein 1 (186 aa).

It belongs to the TNFAIP8 family. In terms of assembly, interacts with FBXW5; TNFAIP8L1 competes with TSC2 to bind FBXW5 increasing TSC2 stability by preventing its ubiquitination. As to expression, high expression detected in most carcinoma cell lines, especially in cells transformed with virus genomes.

The protein localises to the cytoplasm. Acts as a negative regulator of mTOR activity. This is Tumor necrosis factor alpha-induced protein 8-like protein 1 (TNFAIP8L1) from Homo sapiens (Human).